The chain runs to 720 residues: Putative fatty acid oxidation complex trifunctional enzyme (720 aa).

A 3-hydroxyacyl-CoA dehydrogenase region spans residues 1 to 384 (MQNEIKKVCV…SWKYGPFELL (384 aa)). The interval 453-720 (FVITTKMNCL…TIEKLKAIVK (268 aa)) is enoyl-CoA hydratase/isomerase.

In the N-terminal section; belongs to the 3-hydroxyacyl-CoA dehydrogenase family. This sequence in the C-terminal section; belongs to the enoyl-CoA hydratase/isomerase family.

It catalyses the reaction a (3S)-3-hydroxyacyl-CoA + NAD(+) = a 3-oxoacyl-CoA + NADH + H(+). The enzyme catalyses a (3S)-3-hydroxyacyl-CoA = a (2E)-enoyl-CoA + H2O. The catalysed reaction is a 4-saturated-(3S)-3-hydroxyacyl-CoA = a (3E)-enoyl-CoA + H2O. It carries out the reaction a (3Z)-enoyl-CoA = a 4-saturated (2E)-enoyl-CoA. It catalyses the reaction a (3E)-enoyl-CoA = a 4-saturated (2E)-enoyl-CoA. The sequence is that of Putative fatty acid oxidation complex trifunctional enzyme from Rickettsia felis (strain ATCC VR-1525 / URRWXCal2) (Rickettsia azadi).